A 290-amino-acid polypeptide reads, in one-letter code: UDP-N-acetylenolpyruvoylglucosamine reductase (290 aa).

An FAD-binding PCMH-type domain is found at 20–187 (GVGGESEMWF…SRVRLKLRPS (168 aa)). Residue arginine 167 is part of the active site.

Belongs to the MurB family. FAD serves as cofactor.

It localises to the cytoplasm. The catalysed reaction is UDP-N-acetyl-alpha-D-muramate + NADP(+) = UDP-N-acetyl-3-O-(1-carboxyvinyl)-alpha-D-glucosamine + NADPH + H(+). It participates in cell wall biogenesis; peptidoglycan biosynthesis. Its function is as follows. Cell wall formation. This chain is UDP-N-acetylenolpyruvoylglucosamine reductase, found in Deinococcus radiodurans (strain ATCC 13939 / DSM 20539 / JCM 16871 / CCUG 27074 / LMG 4051 / NBRC 15346 / NCIMB 9279 / VKM B-1422 / R1).